Reading from the N-terminus, the 681-residue chain is Chaperone protein HtpG (681 aa).

An a; substrate-binding region spans residues 1–326 (MQKGNIGVTT…SPDIPLNVSR (326 aa)). Positions 327-545 (SYLQSDSNVK…YMRRMKEMAN (219 aa)) are b. The interval 546-681 (IQAGMSFYGE…NFVKRSIELI (136 aa)) is c. The disordered stretch occupies residues 601–620 (DALKKKQEGKKDEDIPTAEK).

The protein belongs to the heat shock protein 90 family. In terms of assembly, homodimer.

Its subcellular location is the cytoplasm. Its function is as follows. Molecular chaperone. Has ATPase activity. The polypeptide is Chaperone protein HtpG (Bacteroides fragilis (strain ATCC 25285 / DSM 2151 / CCUG 4856 / JCM 11019 / LMG 10263 / NCTC 9343 / Onslow / VPI 2553 / EN-2)).